We begin with the raw amino-acid sequence, 408 residues long: LL-diaminopimelate aminotransferase (408 aa).

Substrate contacts are provided by Y15 and G42. Residues Y72, 108 to 109 (SK), Y132, N187, Y218, and 246 to 248 (SFS) each bind pyridoxal 5'-phosphate. Residues K109, Y132, and N187 each contribute to the substrate site. K249 is modified (N6-(pyridoxal phosphate)lysine). Pyridoxal 5'-phosphate contacts are provided by R257 and N292. Substrate contacts are provided by N292 and R388.

Belongs to the class-I pyridoxal-phosphate-dependent aminotransferase family. LL-diaminopimelate aminotransferase subfamily. Homodimer. Pyridoxal 5'-phosphate is required as a cofactor.

It carries out the reaction (2S,6S)-2,6-diaminopimelate + 2-oxoglutarate = (S)-2,3,4,5-tetrahydrodipicolinate + L-glutamate + H2O + H(+). It functions in the pathway amino-acid biosynthesis; L-lysine biosynthesis via DAP pathway; LL-2,6-diaminopimelate from (S)-tetrahydrodipicolinate (aminotransferase route): step 1/1. In terms of biological role, involved in the synthesis of meso-diaminopimelate (m-DAP or DL-DAP), required for both lysine and peptidoglycan biosynthesis. Catalyzes the direct conversion of tetrahydrodipicolinate to LL-diaminopimelate. This is LL-diaminopimelate aminotransferase from Leptospira borgpetersenii serovar Hardjo-bovis (strain L550).